The sequence spans 594 residues: A-type ATP synthase subunit A (594 aa).

Glycine 236–threonine 243 contacts ATP.

It belongs to the ATPase alpha/beta chains family. Has multiple subunits with at least A(3), B(3), C, D, E, F, H, I and proteolipid K(x).

It is found in the cell membrane. It carries out the reaction ATP + H2O + 4 H(+)(in) = ADP + phosphate + 5 H(+)(out). In terms of biological role, component of the A-type ATP synthase that produces ATP from ADP in the presence of a proton gradient across the membrane. The A chain is the catalytic subunit. The polypeptide is A-type ATP synthase subunit A (Pyrobaculum neutrophilum (strain DSM 2338 / JCM 9278 / NBRC 100436 / V24Sta) (Thermoproteus neutrophilus)).